The following is a 194-amino-acid chain: Outer-membrane lipoprotein LolB (194 aa).

The N-terminal stretch at 1–18 (MKLLQHLTLIFCLLILTA) is a signal peptide. The N-palmitoyl cysteine moiety is linked to residue cysteine 19. Cysteine 19 is lipidated: S-diacylglycerol cysteine.

The protein belongs to the LolB family. As to quaternary structure, monomer.

It localises to the cell outer membrane. In terms of biological role, plays a critical role in the incorporation of lipoproteins in the outer membrane after they are released by the LolA protein. In Tolumonas auensis (strain DSM 9187 / NBRC 110442 / TA 4), this protein is Outer-membrane lipoprotein LolB.